Here is a 131-residue protein sequence, read N- to C-terminus: Small ribosomal subunit protein eS8 (131 aa).

Positions 1–37 (MKLGAFYKGGDLKKPSGGKKRRVRRTKKKALGGGPPQ) are disordered. The span at 16–30 (SGGKKRRVRRTKKKA) shows a compositional bias: basic residues.

This sequence belongs to the eukaryotic ribosomal protein eS8 family. In terms of assembly, part of the 30S ribosomal subunit.

The chain is Small ribosomal subunit protein eS8 from Pyrobaculum neutrophilum (strain DSM 2338 / JCM 9278 / NBRC 100436 / V24Sta) (Thermoproteus neutrophilus).